The following is a 110-amino-acid chain: MKTINLNAAVKTKCFNGKYDETMWFLMAVEGDIIEVETTEGMGTDFTFTIQVHNFFTGWIYELNTVIVGKIEQNELGEWHYVTARQRAERLIEKMKKVGKLDMQHWKVVK.

This is an uncharacterized protein from Enterobacteria phage T4 (Bacteriophage T4).